The primary structure comprises 85 residues: ATP synthase subunit c (85 aa).

The next 2 helical transmembrane spans lie at 10–30 (IAVAIIVGLCALGTAVGFAVL) and 53–73 (FIIAGLLDAVPMIGIVIALLF).

It belongs to the ATPase C chain family. As to quaternary structure, F-type ATPases have 2 components, F(1) - the catalytic core - and F(0) - the membrane proton channel. F(1) has five subunits: alpha(3), beta(3), gamma(1), delta(1), epsilon(1). F(0) has three main subunits: a(1), b(2) and c(10-14). The alpha and beta chains form an alternating ring which encloses part of the gamma chain. F(1) is attached to F(0) by a central stalk formed by the gamma and epsilon chains, while a peripheral stalk is formed by the delta and b chains.

Its subcellular location is the cell inner membrane. F(1)F(0) ATP synthase produces ATP from ADP in the presence of a proton or sodium gradient. F-type ATPases consist of two structural domains, F(1) containing the extramembraneous catalytic core and F(0) containing the membrane proton channel, linked together by a central stalk and a peripheral stalk. During catalysis, ATP synthesis in the catalytic domain of F(1) is coupled via a rotary mechanism of the central stalk subunits to proton translocation. Functionally, key component of the F(0) channel; it plays a direct role in translocation across the membrane. A homomeric c-ring of between 10-14 subunits forms the central stalk rotor element with the F(1) delta and epsilon subunits. The polypeptide is ATP synthase subunit c (Vibrio vulnificus (strain CMCP6)).